We begin with the raw amino-acid sequence, 314 residues long: (-)-isopiperitenone reductase (314 aa).

10–33 (VTGANKGIGFEICRQLAEKGIIVI) contacts NADP(+). Serine 182 lines the substrate pocket.

It belongs to the short-chain dehydrogenases/reductases (SDR) family.

Its subcellular location is the cytoplasm. The enzyme catalyses (2R,5R)-isopulegone + NADP(+) = (6R)-isopiperitenone + NADPH + H(+). It participates in secondary metabolite biosynthesis; terpenoid biosynthesis. Monoterpene synthase that catalyzes the specific reduction of the 1(2)-double bond of (-)-isopiperitenone to produce (+)-cis-isopulegone. Does not catalyze the reverse reaction. Unable to reduce (+)-pulegone, (+)-cis-isopulegone, (-)-menthone or the 1,2-double bond of (-)-carvone. Able to utilize NADH with 20% the efficiency of NADPH. The sequence is that of (-)-isopiperitenone reductase from Mentha piperita (Peppermint).